We begin with the raw amino-acid sequence, 142 residues long: uncharacterized protein (142 aa).

Transmembrane regions (helical) follow at residues Val75–Ala97 and Leu107–Tyr124.

Its subcellular location is the cell membrane. This is an uncharacterized protein from Archaeoglobus fulgidus (strain ATCC 49558 / DSM 4304 / JCM 9628 / NBRC 100126 / VC-16).